The chain runs to 148 residues: uncharacterized protein (148 aa).

This is an uncharacterized protein from Pyrococcus woesei.